The following is a 144-amino-acid chain: Eukaryotic translation initiation factor 1A (144 aa).

A compositionally biased stretch (basic residues) spans 1–15 (MPKNKGKGGKNRRRG). Disordered stretches follow at residues 1 to 26 (MPKNKGKGGKNRRRGKNENESEKREL) and 114 to 144 (KINETDTFGPGDDDEIQFDDIGDDDEDIDDI). Positions 16–26 (KNENESEKREL) are enriched in basic and acidic residues. An S1-like domain is found at 22–96 (EKRELVFKED…NKADVILKYN (75 aa)). Residues 124–144 (GDDDEIQFDDIGDDDEDIDDI) are compositionally biased toward acidic residues.

It belongs to the eIF-1A family. Component of the 43S pre-initiation complex (43S PIC), which is composed of the 40S ribosomal subunit, EIF1, eIF1A (EIF1AX), eIF3 complex, EIF5 and eIF2-GTP-initiator tRNA complex (eIF2 ternary complex). Interacts with EIF5; this interaction contributes to the maintenance of EIF1 within the open 43S PIC. Interacts through its C-terminal domain (CTD) with the CTD of EIF5B; from the location of the start codon by the 43S complex until the formation of the 80S complex.

It localises to the cytoplasm. Functionally, component of the 43S pre-initiation complex (43S PIC), which binds to the mRNA cap-proximal region, scans mRNA 5'-untranslated region, and locates the initiation codon. This protein enhances formation of the cap-proximal complex. Together with EIF1, facilitates scanning, start codon recognition, promotion of the assembly of 48S complex at the initiation codon (43S PIC becomes 48S PIC after the start codon is reached), and dissociation of aberrant complexes. After start codon location, together with EIF5B orients the initiator methionine-tRNA in a conformation that allows 60S ribosomal subunit joining to form the 80S initiation complex. Is released after 80S initiation complex formation, just after GTP hydrolysis by EIF5B, and before release of EIF5B. Its globular part is located in the A site of the 40S ribosomal subunit. Its interaction with EIF5 during scanning contribute to the maintenance of EIF1 within the open 43S PIC. In contrast to yeast orthologs, does not bind EIF1. The sequence is that of Eukaryotic translation initiation factor 1A (Eif1a) from Mus musculus (Mouse).